The chain runs to 56 residues: Small ribosomal subunit protein uS14 (56 aa).

Belongs to the universal ribosomal protein uS14 family.

This Kluyveromyces lactis (strain ATCC 8585 / CBS 2359 / DSM 70799 / NBRC 1267 / NRRL Y-1140 / WM37) (Yeast) protein is Small ribosomal subunit protein uS14 (RPS29).